A 287-amino-acid chain; its full sequence is Viomycin phosphotransferase (287 aa).

The Proton acceptor role is filled by D190.

This sequence belongs to the aminoglycoside phosphotransferase family.

It catalyses the reaction viomycin + ATP = O-phosphoviomycin + ADP + H(+). In terms of biological role, the aminoglycoside phosphotransferases achieve inactivation of their antibiotic substrates by phosphorylation. The sequence is that of Viomycin phosphotransferase (vph) from Streptomyces vinaceus.